Here is a 112-residue protein sequence, read N- to C-terminus: Putative transposase YkgN (112 aa).

Belongs to the transposase 8 family.

This Escherichia coli (strain K12) protein is Putative transposase YkgN (ykgN).